A 487-amino-acid polypeptide reads, in one-letter code: Keratin, type I cytoskeletal 12 (487 aa).

Residues 1–118 are head; sequence MSLSVCTSAL…GNDGGLLSGS (118 aa). Positions 119 to 154 are coil 1A; it reads EKETMQNLNDRLASYLGKVRSLEEANAELENKIREW. The IF rod domain occupies 119–433; that stretch reads EKETMQNLND…RLLEGDSQGD (315 aa). A linker 1 region spans residues 158 to 175; sequence RRTRDAGSQSDYSKYYPL. The segment at 176 to 267 is coil 1B; sequence IEDLKNKIVS…KNHEEELQSF (92 aa). Positions 268-290 are linker 12; that stretch reads QAGGPGEVNVEMDAAPGVDLTKV. The interval 291–428 is coil 2; it reads LNEMRAQYEA…IETYRRLLEG (138 aa). The disordered stretch occupies residues 428-461; sequence GDSQGDGFDESSSLSVSKPQTPSVDSSKDPNKTR. The tail stretch occupies residues 429 to 487; sequence DSQGDGFDESSSLSVSKPQTPSVDSSKDPNKTRKIKTVVQEIVNGEVVSSQVQELEEEM. Residues 437-452 show a composition bias toward polar residues; the sequence is ESSSLSVSKPQTPSVD.

It belongs to the intermediate filament family. Heterotetramer of two type I and two type II keratins. Keratin-3 associates with keratin-12. As to expression, expressed in the corneal epithelium (at protein level). Also expressed in the suprabasal limbal epithelium of the cornea (at protein level).

In terms of biological role, involved in corneal epithelium organization, integrity and corneal keratin expression. The protein is Keratin, type I cytoskeletal 12 (Krt12) of Mus musculus (Mouse).